We begin with the raw amino-acid sequence, 74 residues long: Cecropin-P3 (74 aa).

Positions 1-13 are cleaved as a signal peptide; sequence MFLIYLLVQTAES. A propeptide spans 45-74 (removed in mature form); it reads RRRSVGEEDAIPSHIEVNKFFLRKPAKEHI.

The protein belongs to the cecropin family. Expressed in the body wall, intestine, uterus and ovary.

It localises to the secreted. Functionally, has antibacterial activity against several Gram-positive and Gram-negative bacteria. Is weakly active against yeasts. Acts by a nonpore mechanism. The polypeptide is Cecropin-P3 (ASCEC-3) (Ascaris suum (Pig roundworm)).